Consider the following 58-residue polypeptide: UPF0391 membrane protein ABO_0024 (58 aa).

2 helical membrane-spanning segments follow: residues 4–24 and 28–48; these read WALT…GGIA and ASIA…SLVV.

It belongs to the UPF0391 family.

The protein resides in the cell membrane. In Alcanivorax borkumensis (strain ATCC 700651 / DSM 11573 / NCIMB 13689 / SK2), this protein is UPF0391 membrane protein ABO_0024.